Here is a 660-residue protein sequence, read N- to C-terminus: V-type ATP synthase subunit I (660 aa).

7 helical membrane passes run 312-332, 362-382, 453-473, 485-505, 520-540, 560-580, and 593-613; these read FFAF…GLLF, ILGL…GMSF, FIDN…LSLG, IGWI…LGTV, GQIG…LAMI, VLSY…GATF, and SIVI…GGVI.

It belongs to the V-ATPase 116 kDa subunit family.

The protein localises to the cell membrane. Functionally, produces ATP from ADP in the presence of a proton gradient across the membrane. In Chlamydia pneumoniae (Chlamydophila pneumoniae), this protein is V-type ATP synthase subunit I (atpI).